Reading from the N-terminus, the 428-residue chain is MHICIPVTEELQDTLGCRFVLYSVYLEGFLLCKVRYKDLHLWNEQIYRVFGNRLPKFPPKYYLAMTKAMTNERRLQLEQYLQQIVSDPVVTSSEIFMEYFKKLQMDTFNMPTVQLILRIYMPDGAAVELDVQTSDSAERVLEAALFKLGVSRELGEYFSLFITHKEAKGPFTVVKRIAGFELPFLTIWNLEDDQFQIEVRKWYMNPSNDAMLMGSTEAIDLLYLQAVQEFQMEWTRPTKDQQQKLQHCLKQQNKLKFLELMKTVEYYGYLHITSCTSDYPECDSEVTIWVGNNEMSCHFYSPGGHAENLRLSIKDLICWNVTLLPKKQEVMSPNHQHLELKFDYQQGSSLKCITIHTEQAFLLSSCLKKMLSERPVHRCKEELEIQVDKATCKSNIRPEQNGVHAKKQALLKDKREYCVVDNISDLDL.

The region spanning 1 to 107 (MHICIPVTEE…EYFKKLQMDT (107 aa)) is the PX domain.

Belongs to the sorting nexin family.

In terms of biological role, may be involved in protein trafficking. The sequence is that of Sorting nexin-31 (snx31) from Xenopus tropicalis (Western clawed frog).